Reading from the N-terminus, the 572-residue chain is MAKPFFRLQKFLRRTQFLLLFLTAAYLMTGSLLLLQRARVALPQALRAPGSLQALPVATVALGVGLLDSRSLHDPHSSPDLLLDVDTLRSPLARVPPGIRWPRRNRSSLRRRWLHHLTSDPQGPPTLGPEASGPASHNQGNYLGCFSEEGQERTLKGAVFYDLRKMTVSHCQEACAERSYVYAGLEAGAECYCGNRLPATRVSLKECNQECKGEKGSMCGALHRLSVYSVGLQQSGAKKRWTATYRGCFPLPENITRTFSSSMTQANVTVETCSGFCSQKEFPLAILRGWACYCAYPTPQFSLRDAVDGALCSQGTEAQGLPGYCEVYQTPVQDTRCTDRKFLPNKSKVFVALSSFPGAGNTWARHLIEHATGFYTGSYYFDGTLYNKGFKGEKDHWRSRRTICVKTHESGRREIEMFDSAILLIRNPYRSLVAEFNRKCAGHLGYAPDRNWKSKEWPDFVNSYASWWSSHVLDWLKYGKRLLVVHYEELRHSLVPTLREMVAFLNVSVSEERLLCVENNKEGSFRRRGRHPHDQEPFTPEMKDLINGYIRTVDQALRDHNWAGLPREYVPR.

Residues 1-14 (MAKPFFRLQKFLRR) are Cytoplasmic-facing. Residues 15-35 (TQFLLLFLTAAYLMTGSLLLL) traverse the membrane as a helical; Signal-anchor for type II membrane protein segment. Residues 36 to 572 (QRARVALPQA…AGLPREYVPR (537 aa)) lie on the Extracellular side of the membrane. N-linked (GlcNAc...) asparagine glycosylation is present at Asn105. A disordered region spans residues 116 to 135 (HLTSDPQGPPTLGPEASGPA). WSC domains lie at 139-231 (QGNY…YSVG) and 242-337 (TATY…DTRC). 2 N-linked (GlcNAc...) asparagine glycosylation sites follow: Asn254 and Asn345.

Belongs to the WSCD family.

It is found in the golgi apparatus membrane. The enzyme catalyses a ganglioside GM1b + 3'-phosphoadenylyl sulfate = an 8-O-sulfo-ganglioside GM1b + adenosine 3',5'-bisphosphate + H(+). Sialate:O-sulfotransferase which catalyzes 8-O-sulfation at the Sia-glycan level using 3'-phosphoadenosine 5'-phosphosulfate (PAPS) as a donor, forming 8-O-sulfated Sia (Sia8S)-glycans. Displays selectivity toward glycolipids such as GM1 gangliosides. In Rattus norvegicus (Rat), this protein is Sialate:O-sulfotransferase 1 (Wscd1).